Reading from the N-terminus, the 268-residue chain is Ribosomal RNA small subunit methyltransferase A (268 aa).

Residues Asn16, Leu18, Gly43, Glu64, Asp89, and Asn110 each coordinate S-adenosyl-L-methionine.

The protein belongs to the class I-like SAM-binding methyltransferase superfamily. rRNA adenine N(6)-methyltransferase family. RsmA subfamily.

It is found in the cytoplasm. The enzyme catalyses adenosine(1518)/adenosine(1519) in 16S rRNA + 4 S-adenosyl-L-methionine = N(6)-dimethyladenosine(1518)/N(6)-dimethyladenosine(1519) in 16S rRNA + 4 S-adenosyl-L-homocysteine + 4 H(+). In terms of biological role, specifically dimethylates two adjacent adenosines (A1518 and A1519) in the loop of a conserved hairpin near the 3'-end of 16S rRNA in the 30S particle. May play a critical role in biogenesis of 30S subunits. The protein is Ribosomal RNA small subunit methyltransferase A of Pseudomonas syringae pv. tomato (strain ATCC BAA-871 / DC3000).